The sequence spans 276 residues: NH(3)-dependent NAD(+) synthetase (276 aa).

43–50 (GISGGVDS) contributes to the ATP binding site. D49 contributes to the Mg(2+) binding site. R146 lines the deamido-NAD(+) pocket. T166 contacts ATP. E171 contributes to the Mg(2+) binding site. The deamido-NAD(+) site is built by K179 and D186. Residues K195 and T217 each coordinate ATP. 266–267 (HK) is a deamido-NAD(+) binding site.

It belongs to the NAD synthetase family. In terms of assembly, homodimer.

The enzyme catalyses deamido-NAD(+) + NH4(+) + ATP = AMP + diphosphate + NAD(+) + H(+). The protein operates within cofactor biosynthesis; NAD(+) biosynthesis; NAD(+) from deamido-NAD(+) (ammonia route): step 1/1. In terms of biological role, catalyzes the ATP-dependent amidation of deamido-NAD to form NAD. Uses ammonia as a nitrogen source. In Vibrio parahaemolyticus serotype O3:K6 (strain RIMD 2210633), this protein is NH(3)-dependent NAD(+) synthetase.